The following is a 259-amino-acid chain: DNA-directed RNA polymerase subunit Rpo3 (259 aa).

It belongs to the archaeal Rpo3/eukaryotic RPB3 RNA polymerase subunit family. Part of the RNA polymerase complex.

It localises to the cytoplasm. The enzyme catalyses RNA(n) + a ribonucleoside 5'-triphosphate = RNA(n+1) + diphosphate. Functionally, DNA-dependent RNA polymerase (RNAP) catalyzes the transcription of DNA into RNA using the four ribonucleoside triphosphates as substrates. This Thermococcus kodakarensis (strain ATCC BAA-918 / JCM 12380 / KOD1) (Pyrococcus kodakaraensis (strain KOD1)) protein is DNA-directed RNA polymerase subunit Rpo3.